The chain runs to 306 residues: Nod factor export ATP-binding protein I (306 aa).

An ABC transporter domain is found at 8–238 (IDLVGVRKSF…HIGCNVIEIY (231 aa)). 40–47 (GPNGAGKS) provides a ligand contact to ATP.

It belongs to the ABC transporter superfamily. Lipooligosaccharide exporter (TC 3.A.1.102) family. In terms of assembly, the complex is composed of two ATP-binding proteins (NodI) and two transmembrane proteins (NodJ).

Its subcellular location is the cell inner membrane. Its function is as follows. Part of the ABC transporter complex NodIJ involved in the export of the nodulation factors (Nod factors), the bacterial signal molecules that induce symbiosis and subsequent nodulation induction. Nod factors are LCO (lipo-chitin oligosaccharide), a modified beta-1,4-linked N-acetylglucosamine oligosaccharide. This subunit is responsible for energy coupling to the transport system. The polypeptide is Nod factor export ATP-binding protein I (Bradyrhizobium diazoefficiens (strain JCM 10833 / BCRC 13528 / IAM 13628 / NBRC 14792 / USDA 110)).